We begin with the raw amino-acid sequence, 408 residues long: S-adenosylmethionine synthase (408 aa).

Residue 140 to 145 (GQGSVD) coordinates ATP.

This sequence belongs to the AdoMet synthase 2 family. The cofactor is Mg(2+).

The enzyme catalyses L-methionine + ATP + H2O = S-adenosyl-L-methionine + phosphate + diphosphate. It participates in amino-acid biosynthesis; S-adenosyl-L-methionine biosynthesis; S-adenosyl-L-methionine from L-methionine: step 1/1. In terms of biological role, catalyzes the formation of S-adenosylmethionine from methionine and ATP. This Caldivirga maquilingensis (strain ATCC 700844 / DSM 13496 / JCM 10307 / IC-167) protein is S-adenosylmethionine synthase.